The primary structure comprises 217 residues: Ribose-5-phosphate isomerase A (217 aa).

Residues 28–31 (TGST), 81–84 (DGAD), and 94–97 (KGGG) each bind substrate. E103 functions as the Proton acceptor in the catalytic mechanism. Position 121 (K121) interacts with substrate.

This sequence belongs to the ribose 5-phosphate isomerase family. As to quaternary structure, homodimer.

The catalysed reaction is aldehydo-D-ribose 5-phosphate = D-ribulose 5-phosphate. The protein operates within carbohydrate degradation; pentose phosphate pathway; D-ribose 5-phosphate from D-ribulose 5-phosphate (non-oxidative stage): step 1/1. Catalyzes the reversible conversion of ribose-5-phosphate to ribulose 5-phosphate. This is Ribose-5-phosphate isomerase A from Aeromonas hydrophila subsp. hydrophila (strain ATCC 7966 / DSM 30187 / BCRC 13018 / CCUG 14551 / JCM 1027 / KCTC 2358 / NCIMB 9240 / NCTC 8049).